The chain runs to 112 residues: Small ribosomal subunit protein bS6 (112 aa).

It belongs to the bacterial ribosomal protein bS6 family.

Its function is as follows. Binds together with bS18 to 16S ribosomal RNA. The sequence is that of Small ribosomal subunit protein bS6 from Chlamydia felis (strain Fe/C-56) (Chlamydophila felis).